The chain runs to 549 residues: MLCEIECRALSTAHTRLIHDFEPRDALTYLEGKNIFTEDHSELISKMSTRLERIANFLRIYRRQASELGPLIDFFNYNNQSHLADFLEDYIDFAINEPDLLRPVVIAPQFSRQMLDRKLLLGNVPKQMTCYIREYHVDRVIKKLDEMCDLDSFFLFLHGRAGSGKSVIASQALSKSDQLIGINYDSIVWLKDSGTAPKSTFDLFTDILLMLKSEDDLLNFPSVEHVTSVVLKRMICNALIDRPNTLFVFDDVVQEETIRWAQELRLRCLVTTRDVEISNAASQTCEFIEVTSLEIDECYDFLEAYGMPMPVGEKEEDVLNKTIELSSGNPATLMMFFKSCEPKTFEKMAQLNNKLESRGLVGVECITPYSYKSLAMALQRCVEVLSDEDRSALAFAVVMPPGVDIPVKLWSCVIPVDICSNEEEQLDDEVADRLKRLSKRGALLSGKRMPVLTFKIDHIIHMFLKHVVDAQTIANGISILEQRLLEIGNNNVSVPERHIPSHFQKFRRSSASEMYPKTTEETVIRPEDFPKFMQLHQKFYDSLKNFACC.

The CARD domain maps to 1 to 91; the sequence is MLCEIECRAL…HLADFLEDYI (91 aa). Residues Tyr-131, Gly-162, Gly-164, Lys-165, Ser-166, Val-167, Arg-273, Thr-367, and Tyr-369 each contribute to the ATP site. The NB-ARC domain occupies 133–417; sequence REYHVDRVIK…KLWSCVIPVD (285 aa). Residue Ser-166 coordinates Mg(2+).

In terms of assembly, associates as an asymmetric homodimer with ced-9. Only one ced-4 molecule within the dimer interacts directly with ced-9. Upon release from ced-9, forms a multimer, known as the apoptosome, and interacts with ced-3; the interaction results in ced-3 autoproteolytic cleavage and activation. Multiple oligomeric states of the apoptosome are observed including hexamers, heptamers and octamers. The hexamers likely represent a pre-mature state of the apoptosome and may contribute to the regulation of ced-3 activation. The apoptosome multimer also interacts with two processed ced-3 to form a stable holoenzyme. Interacts with sex-determining protein fem-1. May form a complex composed of ced-3, ced-4 and mac-1 or of ced-9, ced-4 and mac-1. Within the complex, interacts with mac-1.

Its subcellular location is the mitochondrion. It localises to the cytoplasm. The protein localises to the perinuclear region. Functionally, component of the egl-1, ced-9, ced-4 and ced-3 apoptotic signaling cascade required for the initiation of programmed cell death in cells fated to die during embryonic and postembryonic development. During oogenesis, required for germline apoptosis downstream of ced-9 and upstream of ced-3 but independently of egl-1. May regulate germline apoptosis in response to DNA damage, probably downstream of let-60/ras and mpk-1 pathway. Regulates CEP neuron apoptosis in response to high Al(3+) levels. During male tail morphogenesis, promotes apoptosis of the tail-spike cell upstream of ced-3 but independently of egl-1 and ced-9. May play a role in sex-specific cell apoptosis, probably by promoting ced-3-mediated cleavage of sex-determining protein fem-1. During larval development, required for the elimination of transient presynaptic components downstream of egl-1 and ced-9 and upstream of ced-3 apoptotic pathway. Downstream of calreticulin crt-1 and upstream of ced-3 and independently of egl-1 and ced-9, plays a role in the initial steps of axonal regrowth following axotomy. Together with ain-1, a component of the miRNA-induced-silencing complex (miRISC), and probably upstream of ced-3, regulates temporal cell fate patterning during larval development. May play a role in resistance to S.typhimurium-mediated infection. Plays a major role in programmed cell death. egl-1 binds to and directly inhibits the activity of ced-9, releasing the cell death activator ced-4 from a ced-9/ced-4-containing protein complex and allowing ced-4 to induce caspase ced-3 autoproteolytic cleavage and activation. Also forms a holoenzyme with processed ced-3 enhancing ced-3 activity. Its function is as follows. Prevents programmed cell death. The polypeptide is Cell death protein 4 (ced-4) (Caenorhabditis elegans).